Reading from the N-terminus, the 231-residue chain is Ribose-5-phosphate isomerase A (231 aa).

Residues 40–43 (TGST), 93–96 (DGAD), and 106–109 (KGGG) each bind substrate. Catalysis depends on Glu115, which acts as the Proton acceptor. Residue Lys133 participates in substrate binding.

This sequence belongs to the ribose 5-phosphate isomerase family. In terms of assembly, homodimer.

The enzyme catalyses aldehydo-D-ribose 5-phosphate = D-ribulose 5-phosphate. It functions in the pathway carbohydrate degradation; pentose phosphate pathway; D-ribose 5-phosphate from D-ribulose 5-phosphate (non-oxidative stage): step 1/1. Functionally, catalyzes the reversible conversion of ribose-5-phosphate to ribulose 5-phosphate. This chain is Ribose-5-phosphate isomerase A, found in Escherichia coli O1:K1 / APEC.